The sequence spans 306 residues: Homoserine kinase (306 aa).

An ATP-binding site is contributed by 90–100; it reads PLARGLGSSAS.

This sequence belongs to the GHMP kinase family. Homoserine kinase subfamily.

It localises to the cytoplasm. The enzyme catalyses L-homoserine + ATP = O-phospho-L-homoserine + ADP + H(+). It functions in the pathway amino-acid biosynthesis; L-threonine biosynthesis; L-threonine from L-aspartate: step 4/5. Catalyzes the ATP-dependent phosphorylation of L-homoserine to L-homoserine phosphate. The polypeptide is Homoserine kinase (Staphylococcus epidermidis (strain ATCC 35984 / DSM 28319 / BCRC 17069 / CCUG 31568 / BM 3577 / RP62A)).